We begin with the raw amino-acid sequence, 502 residues long: Cardiolipin synthase (502 aa).

The next 3 helical transmembrane spans lie at 7 to 27 (VAIL…FWEG), 29 to 49 (LLGL…LVIS), and 59 to 79 (IAWL…YLLF). PLD phosphodiesterase domains lie at 237–264 (INFR…GDEY) and 415–442 (EKGF…DMRS). Active-site residues include His242, Lys244, Asp249, His420, Lys422, and Asp427.

Belongs to the phospholipase D family. Cardiolipin synthase subfamily.

Its subcellular location is the cell membrane. The enzyme catalyses 2 a 1,2-diacyl-sn-glycero-3-phospho-(1'-sn-glycerol) = a cardiolipin + glycerol. Catalyzes the reversible phosphatidyl group transfer from one phosphatidylglycerol molecule to another to form cardiolipin (CL) (diphosphatidylglycerol) and glycerol. The sequence is that of Cardiolipin synthase (cls) from Geobacillus kaustophilus (strain HTA426).